Reading from the N-terminus, the 208-residue chain is Glutathione S-transferase P (208 aa).

A GST N-terminal domain is found at 1 to 78 (MTLKLTYFDI…HLARLNGLNG (78 aa)). Glutathione contacts are provided by residues tyrosine 7, tryptophan 38, lysine 42, 49-50 (QV), and 62-63 (QS). In terms of domain architecture, GST C-terminal spans 80-202 (NETETTFIDM…NKRAAINPPV (123 aa)).

The protein belongs to the GST superfamily. Pi family. Homodimer. As to expression, expressed in dopaminergic (DA) neuron (at protein levels).

The enzyme catalyses RX + glutathione = an S-substituted glutathione + a halide anion + H(+). Its function is as follows. Conjugation of reduced glutathione to a wide number of exogenous and endogenous hydrophobic electrophiles. Prevents dopaminergic CEP neuron degeneration in response to Mn(2+). This chain is Glutathione S-transferase P (gst-1), found in Caenorhabditis elegans.